A 1859-amino-acid chain; its full sequence is U3 small nucleolar RNA-associated protein 10 (1859 aa).

A helical transmembrane segment spans residues 258 to 278 (LGAYSVLAVLSAVAPLSIELL). An HEAT 1 repeat occupies 578–616 (VLPLLLIAFNDPSSHIRAAFAQLVQLVSEITKAIHENKK). The helical transmembrane segment at 1392 to 1412 (IVIASISAIVSIVNVLGIKTL) threads the bilayer. The stretch at 1819-1857 (LVPHIAELLEDDDEAVEIEVREGLVRVIEKVLGEPLDRY) is one HEAT 2 repeat.

The protein belongs to the HEATR1/UTP10 family. In terms of assembly, component of the ribosomal small subunit (SSU) processome.

It localises to the nucleus. The protein localises to the nucleolus. The protein resides in the membrane. Its function is as follows. Involved in nucleolar processing of pre-18S ribosomal RNA. Involved in ribosome biosynthesis. This Lodderomyces elongisporus (strain ATCC 11503 / CBS 2605 / JCM 1781 / NBRC 1676 / NRRL YB-4239) (Yeast) protein is U3 small nucleolar RNA-associated protein 10.